Here is a 403-residue protein sequence, read N- to C-terminus: Acetylornithine aminotransferase (403 aa).

Pyridoxal 5'-phosphate-binding positions include 101–102 (GA) and F134. R137 lines the N(2)-acetyl-L-ornithine pocket. 219-222 (DEVQ) contacts pyridoxal 5'-phosphate. K248 bears the N6-(pyridoxal phosphate)lysine mark. A N(2)-acetyl-L-ornithine-binding site is contributed by T276. T277 contacts pyridoxal 5'-phosphate.

It belongs to the class-III pyridoxal-phosphate-dependent aminotransferase family. ArgD subfamily. In terms of assembly, homodimer. Pyridoxal 5'-phosphate serves as cofactor.

Its subcellular location is the cytoplasm. It carries out the reaction N(2)-acetyl-L-ornithine + 2-oxoglutarate = N-acetyl-L-glutamate 5-semialdehyde + L-glutamate. It functions in the pathway amino-acid biosynthesis; L-arginine biosynthesis; N(2)-acetyl-L-ornithine from L-glutamate: step 4/4. The chain is Acetylornithine aminotransferase from Brucella melitensis biotype 1 (strain ATCC 23456 / CCUG 17765 / NCTC 10094 / 16M).